A 539-amino-acid polypeptide reads, in one-letter code: Netrin-G1 (539 aa).

Residues 1-28 (MYLSRFLSIHALWVTVSSVMQPYPLVWG) form the signal peptide. 3 disulfides stabilise this stretch: C33–C50, C72–C92, and C80–C88. The region spanning 46–296 (DYMACQPEST…AISDIKVRGR (251 aa)) is the Laminin N-terminal domain. An NGL discriminant loop I region spans residues 80–91 (CAMGNPYMCNNE). The N-linked (GlcNAc...) asparagine glycan is linked to N133. C182 and C206 are disulfide-bonded. Residues 208 to 214 (EEYSTGY) form an NGL discriminant loop II region. The segment at 273–275 (EIF) is NGL discriminant loop III. Cystine bridges form between C297–C306, C299–C315, C317–C326, C329–C354, C364–C373, C366–C384, C387–C396, C399–C417, C420–C432, C422–C438, C440–C449, C452–C462, C467–C480, C474–C486, and C488–C497. Laminin EGF-like domains lie at 297-356 (CKCN…TCIP), 364-419 (CECF…VCIE), and 420-469 (CYCN…VCDN). An N-linked (GlcNAc...) asparagine glycan is attached at N320. N406 is a glycosylation site (N-linked (GlcNAc...) asparagine). An N-linked (GlcNAc...) asparagine glycan is attached at N433. S510 carries the GPI-anchor amidated serine lipid modification. The propeptide at 511-539 (DSGQGAPPHGSPALLLLTTLLGTASPLVF) is removed in mature form.

In terms of assembly, interacts with NGL1. In terms of processing, N-glycosylated. Highly expressed in the thalamus, with very low expression, if any, in other tissues.

The protein resides in the cell membrane. Its function is as follows. Involved in controlling patterning and neuronal circuit formation at the laminar, cellular, subcellular and synaptic levels. Promotes neurite outgrowth of both axons and dendrites. The chain is Netrin-G1 (NTNG1) from Homo sapiens (Human).